A 316-amino-acid chain; its full sequence is Beta-ketoacyl-[acyl-carrier-protein] synthase III (316 aa).

Residues Cys-112 and His-243 contribute to the active site. The ACP-binding stretch occupies residues 244-248 (QANLR). The active site involves Asn-273.

The protein belongs to the thiolase-like superfamily. FabH family. Homodimer.

Its subcellular location is the cytoplasm. The enzyme catalyses malonyl-[ACP] + acetyl-CoA + H(+) = 3-oxobutanoyl-[ACP] + CO2 + CoA. Its pathway is lipid metabolism; fatty acid biosynthesis. In terms of biological role, catalyzes the condensation reaction of fatty acid synthesis by the addition to an acyl acceptor of two carbons from malonyl-ACP. Catalyzes the first condensation reaction which initiates fatty acid synthesis and may therefore play a role in governing the total rate of fatty acid production. Possesses both acetoacetyl-ACP synthase and acetyl transacylase activities. Its substrate specificity determines the biosynthesis of branched-chain and/or straight-chain of fatty acids. In Histophilus somni (strain 129Pt) (Haemophilus somnus), this protein is Beta-ketoacyl-[acyl-carrier-protein] synthase III.